The sequence spans 263 residues: uncharacterized protein (263 aa).

Positions 198–224 (KRSSDSFVSLKPGEDEHSPLEISTCGN) are disordered.

This is an uncharacterized protein from Saccharomyces cerevisiae (strain ATCC 204508 / S288c) (Baker's yeast).